The chain runs to 222 residues: Voltage-dependent calcium channel gamma-1 subunit (222 aa).

Residues 1 to 10 (MSPTEAPKVR) are Cytoplasmic-facing. The chain crosses the membrane as a helical span at residues 11-29 (VTLFCILVGIVLAMTAVVS). Over 30–108 (DHWAVLSPHM…TQKEYSISAA (79 aa)) the chain is Extracellular. N-linked (GlcNAc...) asparagine glycosylation is found at N43 and N79. An intrachain disulfide couples C57 to C80. The helical transmembrane segment at 109–129 (AISVFSLGFLIMGTICALMAF) threads the bilayer. Topologically, residues 130-134 (RKKRD) are cytoplasmic. A helical transmembrane segment spans residues 135 to 155 (YLLRPASMFYVFAGLCLFVSL). Residues 156–179 (EVMRQSVKRMIDSEDTVWIEYYYS) are Extracellular-facing. The helical transmembrane segment at 180 to 204 (WSFACACAAFVLLFLGGISLLLFSL) threads the bilayer. Residues 205-222 (PRMPQNPWESCMDAEPEH) are Cytoplasmic-facing.

This sequence belongs to the PMP-22/EMP/MP20 family. CACNG subfamily. In terms of assembly, component of a calcium channel complex consisting of a pore-forming alpha subunit (CACNA1S) and the ancillary subunits CACNB1 or CACNB2, CACNG1 and CACNA2D1. The channel complex contains alpha, beta, gamma and delta subunits in a 1:1:1:1 ratio, i.e. it contains either CACNB1 or CACNB2. In terms of processing, N-glycosylated. In terms of tissue distribution, skeletal muscle (at protein level).

The protein localises to the cell membrane. Its subcellular location is the sarcolemma. Its function is as follows. Regulatory subunit of the voltage-gated calcium channel that gives rise to L-type calcium currents in skeletal muscle. Regulates channel inactivation kinetics. The protein is Voltage-dependent calcium channel gamma-1 subunit (CACNG1) of Oryctolagus cuniculus (Rabbit).